The chain runs to 117 residues: Conotoxin vil14a (117 aa).

The N-terminal stretch at 1-22 (MGFRVLVLVVMATTSALPFTFS) is a signal peptide. A propeptide spanning residues 23 to 90 (EEPGRSPFRP…FAETPVGQKR (68 aa)) is cleaved from the precursor. The interval 53-86 (RADGQPPDMRQPEMRRPEMRRPEVRQPEFAETPV) is disordered. The span at 62–80 (RQPEMRRPEMRRPEVRQPE) shows a compositional bias: basic and acidic residues. 2 disulfides stabilise this stretch: Cys-96-Cys-116 and Cys-100-Cys-112.

It belongs to the conotoxin R superfamily. Expressed by the venom duct.

The protein resides in the secreted. This is Conotoxin vil14a from Conus villepinii (Villepin's cone).